A 1252-amino-acid polypeptide reads, in one-letter code: Protein ITPRID2 (1252 aa).

Positions 28 to 70 (CRSSWQASETEDLSTETTTQDEDEDDEEDLPGTKLPAPAGRGN) are disordered. Positions 36-57 (ETEDLSTETTTQDEDEDDEEDL) are enriched in acidic residues. T85 is modified (phosphothreonine). S90, S109, S207, S268, and S328 each carry phosphoserine. 3 disordered regions span residues 306–483 (DKTE…HVPA), 552–575 (HVTP…APLQ), and 595–636 (FPQC…GELP). Positions 357–372 (TVTEEVSGSSSTVTDS) are enriched in low complexity. 2 stretches are compositionally biased toward basic and acidic residues: residues 395 to 407 (SREA…DPLR) and 415 to 428 (DLGH…HCEL). Positions 429 to 441 (ESSSELKSAQASS) are enriched in low complexity. S465 is modified (phosphoserine). 7 positions are modified to phosphoserine: S643, S667, S736, S738, S745, S758, and S766. K807 is covalently cross-linked (Glycyl lysine isopeptide (Lys-Gly) (interchain with G-Cter in SUMO2)). Phosphoserine is present on residues S866 and S898. Residues 955-1031 (QELQVVRRSL…LLGLDEQLRA (77 aa)) adopt a coiled-coil conformation. Residues S1036, S1051, S1056, S1059, and S1114 each carry the phosphoserine modification. Disordered stretches follow at residues 1095–1131 (GESS…GSKP) and 1147–1180 (ALTP…ASPV). Positions 1103 to 1117 (SQATSESSSVCSSPS) are enriched in low complexity. Residue T1149 is modified to Phosphothreonine. Over residues 1151–1161 (TAPSRTGSVQT) the composition is skewed to polar residues. S1154 is modified (phosphoserine). T1161 is subject to Phosphothreonine.

The protein localises to the cytoplasm. The polypeptide is Protein ITPRID2 (Itprid2) (Mus musculus (Mouse)).